The chain runs to 156 residues: Aspartate 1-decarboxylase (156 aa).

The active-site Schiff-base intermediate with substrate; via pyruvic acid is the S29. S29 carries the post-translational modification Pyruvic acid (Ser). T61 serves as a coordination point for substrate. Y62 functions as the Proton donor in the catalytic mechanism. 77–79 (GAA) is a binding site for substrate.

Belongs to the PanD family. As to quaternary structure, heterooctamer of four alpha and four beta subunits. Pyruvate serves as cofactor. Is synthesized initially as an inactive proenzyme, which is activated by self-cleavage at a specific serine bond to produce a beta-subunit with a hydroxyl group at its C-terminus and an alpha-subunit with a pyruvoyl group at its N-terminus.

Its subcellular location is the cytoplasm. It carries out the reaction L-aspartate + H(+) = beta-alanine + CO2. The protein operates within cofactor biosynthesis; (R)-pantothenate biosynthesis; beta-alanine from L-aspartate: step 1/1. In terms of biological role, catalyzes the pyruvoyl-dependent decarboxylation of aspartate to produce beta-alanine. This Rhodopirellula baltica (strain DSM 10527 / NCIMB 13988 / SH1) protein is Aspartate 1-decarboxylase.